Consider the following 207-residue polypeptide: MNEMLTLVGQLRSDFGTSSARALRRQGKVPGVIYKKGITPIHVCTLEKEVAKLYRKPFFSSTVIQLQVDDQRFKVLPKAVQLHPVTEFINHIDFILVEQNGGIQKVKVPISFEGKDKSLGIKRGGYLNIVKRYVDLLCPVDKIPQCIKCDIANVPVGASIKVSRLELPEGCNLVKRTTDYVIASVIGKSSKQDKEEEGTAEDGADSK.

This sequence belongs to the bacterial ribosomal protein bL25 family. CTC subfamily. In terms of assembly, part of the 50S ribosomal subunit; part of the 5S rRNA/L5/L18/L25 subcomplex. Contacts the 5S rRNA. Binds to the 5S rRNA independently of L5 and L18.

Functionally, this is one of the proteins that binds to the 5S RNA in the ribosome where it forms part of the central protuberance. The polypeptide is Large ribosomal subunit protein bL25 (Orientia tsutsugamushi (strain Ikeda) (Rickettsia tsutsugamushi)).